An 89-amino-acid polypeptide reads, in one-letter code: Putative defensin-like protein 40 (89 aa).

An N-terminal signal peptide occupies residues 1 to 26 (MAGIANGVGLLISFMLICGGMPKGHA). Disulfide bonds link Cys33–Cys88, Cys46–Cys69, Cys55–Cys81, and Cys59–Cys83.

It belongs to the DEFL family.

It localises to the secreted. The chain is Putative defensin-like protein 40 from Arabidopsis thaliana (Mouse-ear cress).